Here is a 109-residue protein sequence, read N- to C-terminus: Cytochrome bo(3) ubiquinol oxidase subunit 4 (109 aa).

Residues 1-17 lie on the Cytoplasmic side of the membrane; that stretch reads MSHSTDHSGASHGSVKT. Residues 18-36 traverse the membrane as a helical segment; that stretch reads YMTGFILSIILTVIPFWMV. The Periplasmic segment spans residues 37 to 45; that stretch reads MTGAASPAV. A helical transmembrane segment spans residues 46–64; it reads ILGTILAMAVVQVLVHLVC. Residues 65–80 lie on the Cytoplasmic side of the membrane; that stretch reads FLHMNTKSDEGWNMTA. Residues 81-99 traverse the membrane as a helical segment; that stretch reads FVFTVLIIAILVVGSIWIM. The Periplasmic segment spans residues 100–109; that stretch reads WNLNYNMMMH.

Belongs to the cytochrome c oxidase bacterial subunit 4 family. In terms of assembly, heterooctamer of two A chains, two B chains, two C chains and two D chains.

It localises to the cell inner membrane. Cytochrome bo(3) ubiquinol terminal oxidase is the component of the aerobic respiratory chain of E.coli that predominates when cells are grown at high aeration. Has proton pump activity across the membrane in addition to electron transfer, pumping 2 protons/electron. The polypeptide is Cytochrome bo(3) ubiquinol oxidase subunit 4 (cyoD) (Escherichia coli O157:H7).